The primary structure comprises 569 residues: Arginine--tRNA ligase (569 aa).

Residues 123–133 (ANPNGPLHVGH) carry the 'HIGH' region motif.

It belongs to the class-I aminoacyl-tRNA synthetase family.

It is found in the cytoplasm. The catalysed reaction is tRNA(Arg) + L-arginine + ATP = L-arginyl-tRNA(Arg) + AMP + diphosphate. The polypeptide is Arginine--tRNA ligase (Methanosarcina barkeri (strain Fusaro / DSM 804)).